Consider the following 125-residue polypeptide: Transposase for transposon Tn554 (125 aa).

Functionally, one of three proteins encoded by transposon Tn554 required for its transposition. This is Transposase for transposon Tn554 (tnpC1) from Staphylococcus aureus (strain Mu50 / ATCC 700699).